The sequence spans 212 residues: Outer-membrane lipoprotein LolB (212 aa).

The signal sequence occupies residues M1–G16. The N-palmitoyl cysteine moiety is linked to residue C17. C17 carries S-diacylglycerol cysteine lipidation.

Belongs to the LolB family. As to quaternary structure, monomer.

The protein localises to the cell outer membrane. Functionally, plays a critical role in the incorporation of lipoproteins in the outer membrane after they are released by the LolA protein. This chain is Outer-membrane lipoprotein LolB, found in Nitrosomonas europaea (strain ATCC 19718 / CIP 103999 / KCTC 2705 / NBRC 14298).